The primary structure comprises 266 residues: Undecaprenyl-diphosphatase (266 aa).

The next 8 helical transmembrane spans lie at 4-24 (WVLAIILGVVEGLTEFIPVSS), 41-61 (GKVFEVMIQLGAILAVISVYF), 80-100 (FVASIVLAFLPAGFAGFLLHD), 105-125 (VLFETPAVICVSLILGGFALL), 139-159 (AGAFPLKTAFIIGLFQCLALI), 182-202 (AAEFSFFLAMPTMAGAFTVDL), 212-232 (DDAGIIALGFVCALVAAIITV), and 245-265 (APFAWWRIAVGALGLLGLAFI).

This sequence belongs to the UppP family.

Its subcellular location is the cell inner membrane. It carries out the reaction di-trans,octa-cis-undecaprenyl diphosphate + H2O = di-trans,octa-cis-undecaprenyl phosphate + phosphate + H(+). Catalyzes the dephosphorylation of undecaprenyl diphosphate (UPP). Confers resistance to bacitracin. The sequence is that of Undecaprenyl-diphosphatase from Phenylobacterium zucineum (strain HLK1).